Reading from the N-terminus, the 674-residue chain is Forkhead box protein P1 (674 aa).

The span at 1–19 (MMQESGTETKSNGSAIQNG) shows a compositional bias: polar residues. A disordered region spans residues 1 to 44 (MMQESGTETKSNGSAIQNGSSGGNHLLECGSLREGRSNGETPAV). Residue S82 is modified to Phosphoserine. Residues 269-281 (MNPHASTNGQLSV) are compositionally biased toward polar residues. The tract at residues 269-296 (MNPHASTNGQLSVHTPKRESLSHEEHPH) is disordered. The segment covering 284 to 296 (PKRESLSHEEHPH) has biased composition (basic and acidic residues). K285 is covalently cross-linked (Glycyl lysine isopeptide (Lys-Gly) (interchain with G-Cter in SUMO2)). The segment at 304-329 (GVCKWPGCEAVCEDFQSFLKHLNSEH) adopts a C2H2-type zinc-finger fold. Positions 346–367 (VQQLELQLAKDKERLQAMMTHL) are leucine-zipper. Glycyl lysine isopeptide (Lys-Gly) (interchain with G-Cter in SUMO2) cross-links involve residues K370 and K375. The interval 380–384 (PLNLV) is CTBP1-binding. Over residues 388–401 (TLSKSASEASPQSL) the composition is skewed to polar residues. The disordered stretch occupies residues 388–427 (TLSKSASEASPQSLPHTPTTPTAPITPATQGPSVITTTSM). Residues 402–419 (PHTPTTPTAPITPATQGP) are compositionally biased toward low complexity. K440 participates in a covalent cross-link: Glycyl lysine isopeptide (Lys-Gly) (interchain with G-Cter in SUMO2). A DNA-binding region (fork-head) is located at residues 462–552 (RPPFTYASLI…PQKISGNPSL (91 aa)). The segment at 608–674 (EHTNSNESDS…EDEPVNEDME (67 aa)) is disordered. Residues 609–620 (HTNSNESDSSPG) show a composition bias toward polar residues. A Phosphothreonine modification is found at T650. S655 carries the post-translational modification Phosphoserine. The segment covering 664–674 (YEDEPVNEDME) has biased composition (acidic residues).

Forms homodimers and heterodimers with FOXP2 and FOXP4. Dimerization is required for DNA-binding. Self-associates. Interacts with CTBP1. Interacts with NCOR2 and AR. Interacts with FOXP2. Interacts with TBR1. Interacts with AURKA; this interaction facilitates the phosphorylation of FOXP1, which suppresses the expression of FBXL7. Interacts with ZMYM2.

It localises to the nucleus. Functionally, transcriptional repressor. Can act with CTBP1 to synergistically repress transcription but CTPBP1 is not essential. Plays an important role in the specification and differentiation of lung epithelium. Acts cooperatively with FOXP4 to regulate lung secretory epithelial cell fate and regeneration by restricting the goblet cell lineage program; the function may involve regulation of AGR2. Essential transcriptional regulator of B-cell development. Involved in regulation of cardiac muscle cell proliferation. Involved in the columnar organization of spinal motor neurons. Promotes the formation of the lateral motor neuron column (LMC) and the preganglionic motor column (PGC) and is required for respective appropriate motor axon projections. The segment-appropriate generation of spinal cord motor columns requires cooperation with other Hox proteins. Can regulate PITX3 promoter activity; may promote midbrain identity in embryonic stem cell-derived dopamine neurons by regulating PITX3. Negatively regulates the differentiation of T follicular helper cells T(FH)s. Involved in maintenance of hair follicle stem cell quiescence; the function probably involves regulation of FGF18. Represses transcription of various pro-apoptotic genes and cooperates with NF-kappa B-signaling in promoting B-cell expansion by inhibition of caspase-dependent apoptosis. Binds to CSF1R promoter elements and is involved in regulation of monocyte differentiation and macrophage functions; repression of CSF1R in monocytes seems to involve NCOR2 as corepressor. Involved in endothelial cell proliferation, tube formation and migration indicative for a role in angiogenesis; the role in neovascularization seems to implicate suppression of SEMA5B. Can negatively regulate androgen receptor signaling. Acts as a transcriptional activator of the FBXL7 promoter; this activity is regulated by AURKA. This chain is Forkhead box protein P1 (FOXP1), found in Bos taurus (Bovine).